Consider the following 770-residue polypeptide: Lysine-specific histone demethylase 1 (770 aa).

A disordered region spans residues 1–21 (MSSDTGSEYLDEEIRGDELGP). Residues 28-126 (LAAAASAARL…FGRYVRSTKI (99 aa)) form the SWIRM domain. 137 to 165 (VIVIGAGAAGISAATQLESFGFDVIVLEA) contributes to the FAD binding site. The disordered stretch occupies residues 718 to 739 (NEAVADIPNAPNAPNAQKPEEI).

Belongs to the flavin monoamine oxidase family. Probably part of a large repressor complex. Interacts with CoREST protein spr-1. Interacts with chromobox protein homolog hpl-1. The cofactor is FAD.

Its subcellular location is the nucleus. It catalyses the reaction N(6),N(6)-dimethyl-L-lysyl(4)-[histone H3] + 2 A + 2 H2O = L-lysyl(4)-[histone H3] + 2 formaldehyde + 2 AH2. Functionally, histone demethylase that specifically demethylates 'Lys-4' of histone H3, a specific tag for epigenetic transcriptional activation, thereby acting as a corepressor. Acts by oxidizing the substrate by FAD to generate the corresponding imine that is subsequently hydrolyzed. Demethylates both mono- and di-methylated 'Lys-4' of histone H3. May be involved in H3 demethylation in mitotic cells including gut and embryonic cells. Participates in the transcriptional repression of the presenilin protein hop-1. May act via the formation of a multiprotein complex that remodel or modify the chromatin. Together with met-2, set-17 and set-26, required for transgenerational fertility. Plays a role in developmental growth and lifespan regulation in response to ultraviolet-induced damage. This Caenorhabditis elegans protein is Lysine-specific histone demethylase 1.